The following is a 531-amino-acid chain: Zinc finger protein 837 (531 aa).

Residues 1 to 101 (MEAPAQKAGQ…CGPTSSQNPE (101 aa)) form a disordered region. Basic and acidic residues predominate over residues 24–50 (AREKRPEEPRPLEEDRAGSRPTQKGDL). C2H2-type zinc fingers lie at residues 271–293 (YACD…QRIH), 299–321 (YECA…QKTH), 363–385 (YECA…RRVH), 391–413 (YACP…QRTH), 419–441 (YACP…QRAH), 447–469 (YGCS…ERLH), 475–497 (YICR…LRTH), and 503–525 (YACG…RKRH).

This sequence belongs to the krueppel C2H2-type zinc-finger protein family.

It localises to the nucleus. In terms of biological role, may be involved in transcriptional regulation. The sequence is that of Zinc finger protein 837 (ZNF837) from Homo sapiens (Human).